The sequence spans 582 residues: Sulfite reductase [NADPH] hemoprotein beta-component (582 aa).

The segment covering 1 to 12 (MDLKVKVDRSRD) has biased composition (basic and acidic residues). The disordered stretch occupies residues 1-26 (MDLKVKVDRSRDVSQPLDKLGPDETL). Residues Cys447, Cys453, Cys492, and Cys496 each contribute to the [4Fe-4S] cluster site. Cys496 contributes to the siroheme binding site.

Belongs to the nitrite and sulfite reductase 4Fe-4S domain family. In terms of assembly, alpha(8)-beta(8). The alpha component is a flavoprotein, the beta component is a hemoprotein. The cofactor is siroheme. [4Fe-4S] cluster serves as cofactor.

It catalyses the reaction hydrogen sulfide + 3 NADP(+) + 3 H2O = sulfite + 3 NADPH + 4 H(+). It functions in the pathway sulfur metabolism; hydrogen sulfide biosynthesis; hydrogen sulfide from sulfite (NADPH route): step 1/1. In terms of biological role, component of the sulfite reductase complex that catalyzes the 6-electron reduction of sulfite to sulfide. This is one of several activities required for the biosynthesis of L-cysteine from sulfate. The chain is Sulfite reductase [NADPH] hemoprotein beta-component from Afipia carboxidovorans (strain ATCC 49405 / DSM 1227 / KCTC 32145 / OM5) (Oligotropha carboxidovorans).